The sequence spans 820 residues: Leucine--tRNA ligase (820 aa).

Residues 42–52 (PYPSGDLHMGH) carry the 'HIGH' region motif. Residues 576 to 580 (KMSKS) carry the 'KMSKS' region motif. Lys-579 provides a ligand contact to ATP.

Belongs to the class-I aminoacyl-tRNA synthetase family.

The protein resides in the cytoplasm. The enzyme catalyses tRNA(Leu) + L-leucine + ATP = L-leucyl-tRNA(Leu) + AMP + diphosphate. This chain is Leucine--tRNA ligase, found in Coxiella burnetii (strain CbuK_Q154) (Coxiella burnetii (strain Q154)).